The following is a 95-amino-acid chain: Co-chaperonin GroES (95 aa).

This sequence belongs to the GroES chaperonin family. As to quaternary structure, heptamer of 7 subunits arranged in a ring. Interacts with the chaperonin GroEL.

The protein localises to the cytoplasm. Functionally, together with the chaperonin GroEL, plays an essential role in assisting protein folding. The GroEL-GroES system forms a nano-cage that allows encapsulation of the non-native substrate proteins and provides a physical environment optimized to promote and accelerate protein folding. GroES binds to the apical surface of the GroEL ring, thereby capping the opening of the GroEL channel. This Ruthia magnifica subsp. Calyptogena magnifica protein is Co-chaperonin GroES.